Reading from the N-terminus, the 556-residue chain is Formate--tetrahydrofolate ligase (556 aa).

Position 65-72 (65-72 (TPAGEGKS)) interacts with ATP.

Belongs to the formate--tetrahydrofolate ligase family.

The catalysed reaction is (6S)-5,6,7,8-tetrahydrofolate + formate + ATP = (6R)-10-formyltetrahydrofolate + ADP + phosphate. The protein operates within one-carbon metabolism; tetrahydrofolate interconversion. The chain is Formate--tetrahydrofolate ligase from Streptococcus pneumoniae (strain 70585).